Reading from the N-terminus, the 346-residue chain is UDP-3-O-acylglucosamine N-acyltransferase (346 aa).

Histidine 240 (proton acceptor) is an active-site residue.

The protein belongs to the transferase hexapeptide repeat family. LpxD subfamily. In terms of assembly, homotrimer.

The enzyme catalyses a UDP-3-O-[(3R)-3-hydroxyacyl]-alpha-D-glucosamine + a (3R)-hydroxyacyl-[ACP] = a UDP-2-N,3-O-bis[(3R)-3-hydroxyacyl]-alpha-D-glucosamine + holo-[ACP] + H(+). It participates in bacterial outer membrane biogenesis; LPS lipid A biosynthesis. Its function is as follows. Catalyzes the N-acylation of UDP-3-O-acylglucosamine using 3-hydroxyacyl-ACP as the acyl donor. Is involved in the biosynthesis of lipid A, a phosphorylated glycolipid that anchors the lipopolysaccharide to the outer membrane of the cell. The sequence is that of UDP-3-O-acylglucosamine N-acyltransferase from Phocaeicola vulgatus (strain ATCC 8482 / DSM 1447 / JCM 5826 / CCUG 4940 / NBRC 14291 / NCTC 11154) (Bacteroides vulgatus).